The chain runs to 474 residues: Ribosomal RNA small subunit methyltransferase F (474 aa).

S-adenosyl-L-methionine is bound by residues 119–125 (AAAPGSK), Glu-143, Asp-170, and Asp-188. Residue Cys-241 is the Nucleophile of the active site.

This sequence belongs to the class I-like SAM-binding methyltransferase superfamily. RsmB/NOP family.

The protein localises to the cytoplasm. It carries out the reaction cytidine(1407) in 16S rRNA + S-adenosyl-L-methionine = 5-methylcytidine(1407) in 16S rRNA + S-adenosyl-L-homocysteine + H(+). Functionally, specifically methylates the cytosine at position 1407 (m5C1407) of 16S rRNA. The polypeptide is Ribosomal RNA small subunit methyltransferase F (Shewanella oneidensis (strain ATCC 700550 / JCM 31522 / CIP 106686 / LMG 19005 / NCIMB 14063 / MR-1)).